Reading from the N-terminus, the 138-residue chain is Phosphoribosyl-AMP cyclohydrolase (138 aa).

Asp-84 serves as a coordination point for Mg(2+). Position 85 (Cys-85) interacts with Zn(2+). Mg(2+) contacts are provided by Asp-86 and Asp-88. Zn(2+) contacts are provided by Cys-102 and Cys-109.

The protein belongs to the PRA-CH family. In terms of assembly, homodimer. The cofactor is Mg(2+). Requires Zn(2+) as cofactor.

It is found in the cytoplasm. The enzyme catalyses 1-(5-phospho-beta-D-ribosyl)-5'-AMP + H2O = 1-(5-phospho-beta-D-ribosyl)-5-[(5-phospho-beta-D-ribosylamino)methylideneamino]imidazole-4-carboxamide. It participates in amino-acid biosynthesis; L-histidine biosynthesis; L-histidine from 5-phospho-alpha-D-ribose 1-diphosphate: step 3/9. Its function is as follows. Catalyzes the hydrolysis of the adenine ring of phosphoribosyl-AMP. In Burkholderia multivorans (strain ATCC 17616 / 249), this protein is Phosphoribosyl-AMP cyclohydrolase.